We begin with the raw amino-acid sequence, 179 residues long: MKGGKRIQFTRPNRINNEIRAIKVRLTGVEGDQIGIVNLREALEKAEELGLDLVEISPNAEPPVCRIMDYGKFLYEKSKSSKEQKKKQKVIQVKEIKFRPSTDEGDYQVKLRNLIRFLEDGDKVKITLRFRGREMAHQKIGIDVLNRVKNDLIELAIIESFPSKIEGRQMIMVLAPKKK.

It belongs to the IF-3 family. Monomer.

Its subcellular location is the cytoplasm. IF-3 binds to the 30S ribosomal subunit and shifts the equilibrium between 70S ribosomes and their 50S and 30S subunits in favor of the free subunits, thus enhancing the availability of 30S subunits on which protein synthesis initiation begins. In Buchnera aphidicola subsp. Schizaphis graminum (strain Sg), this protein is Translation initiation factor IF-3.